We begin with the raw amino-acid sequence, 346 residues long: MTKVSILGAGSWGTALALVLADNQYDVCIWGHREELIQQINEHHENKDYLPGVKLSENVRATTDLEAAVADVKTIIVAVPTKAIREVLAQAVSFINQKAIFVHVSKGIEPDTLLRISEMMKEEIPAELREDIVVLSGPSHAEEVGLRHPTTVTVSADSSIESAQAIQDMFMNQNFRVYTNPDMIGVEIGGALKNVIALAAGITDGLGYGDNAKAALITRGLAEIARLGTKMGGNPLTFSGLTGIGDLIVTCTSVHSRNWRAGNMLGKGFKLDEVLEEMGMVVEGVRTTKAAYQLSKKFDVKMPITEALHKVLFDGEKVETAVESLMARVKTHEMEDLVNTFENQMK.

Positions 11, 12, 32, 33, and 106 each coordinate NADPH. Positions 106, 137, and 139 each coordinate sn-glycerol 3-phosphate. Residue Ala-141 participates in NADPH binding. Lys-193, Asp-246, Ser-256, Arg-257, and Asn-258 together coordinate sn-glycerol 3-phosphate. The Proton acceptor role is filled by Lys-193. Arg-257 is an NADPH binding site. Residues Val-281 and Glu-283 each contribute to the NADPH site.

Belongs to the NAD-dependent glycerol-3-phosphate dehydrogenase family.

It localises to the cytoplasm. The catalysed reaction is sn-glycerol 3-phosphate + NAD(+) = dihydroxyacetone phosphate + NADH + H(+). It carries out the reaction sn-glycerol 3-phosphate + NADP(+) = dihydroxyacetone phosphate + NADPH + H(+). The protein operates within membrane lipid metabolism; glycerophospholipid metabolism. Catalyzes the reduction of the glycolytic intermediate dihydroxyacetone phosphate (DHAP) to sn-glycerol 3-phosphate (G3P), the key precursor for phospholipid synthesis. This is Glycerol-3-phosphate dehydrogenase [NAD(P)+] from Bacillus licheniformis (strain ATCC 14580 / DSM 13 / JCM 2505 / CCUG 7422 / NBRC 12200 / NCIMB 9375 / NCTC 10341 / NRRL NRS-1264 / Gibson 46).